We begin with the raw amino-acid sequence, 286 residues long: Large ribosomal subunit protein uL4m (286 aa).

The transit peptide at 1–26 (MTIKRNLVKTLQSIRYQATTATAHAE) directs the protein to the mitochondrion. Positions 85–132 (RRVGASNPPGRSENGFSRRKLMPQKGSGRARVGDANSPTRHNGGRALA) are disordered.

It belongs to the universal ribosomal protein uL4 family. Component of the mitochondrial large ribosomal subunit (mt-LSU). Mature yeast 74S mitochondrial ribosomes consist of a small (37S) and a large (54S) subunit. The 37S small subunit contains a 15S ribosomal RNA (15S mt-rRNA) and 34 different proteins. The 54S large subunit contains a 21S rRNA (21S mt-rRNA) and 46 different proteins.

It is found in the mitochondrion. Functionally, component of the mitochondrial ribosome (mitoribosome), a dedicated translation machinery responsible for the synthesis of mitochondrial genome-encoded proteins, including at least some of the essential transmembrane subunits of the mitochondrial respiratory chain. The mitoribosomes are attached to the mitochondrial inner membrane and translation products are cotranslationally integrated into the membrane. The polypeptide is Large ribosomal subunit protein uL4m (YML6) (Saccharomyces cerevisiae (strain ATCC 204508 / S288c) (Baker's yeast)).